Consider the following 184-residue polypeptide: Cbp/p300-interacting transactivator 4 (184 aa).

A compositionally biased stretch (low complexity) spans 18 to 28; it reads PSAAAAHGPHA. Disordered regions lie at residues 18–67 and 94–128; these read PSAA…YGAF and TPYP…PAHA. The segment covering 104-126 has biased composition (pro residues); it reads PNAPGGPPGPQPAPSAAAPPPPA.

The protein belongs to the CITED family. Interacts via its C-terminal region with the CH1 domain of CREBBP and EP300. Interacts with all TFAP2/AP-2 isoforms. Expressed in most tissues examined with highest levels of expression in heart, liver, skeletal muscle and pancreas. Also expressed in bladder cell line ECV-304 and in various breast cancer cell lines. Also detected in both in situ and invasive breast tumors where its expression is down-regulated and mostly restricted to the cytoplasm of malignant epithelium. Down-regulation of expression is associated with elevated levels of HIF1A and increased tumor growth and angiogenesis.

The protein localises to the nucleus. The protein resides in the cytoplasm. Its function is as follows. Acts as a transcriptional coactivator for TFAP2/AP-2. Enhances estrogen-dependent transactivation mediated by estrogen receptors. May function as an inhibitor of transactivation by HIF1A by disrupting HIF1A interaction with CREBBP. May be involved in regulation of gene expression during development and differentiation of blood cells, endothelial cells and mammary epithelial cells. The protein is Cbp/p300-interacting transactivator 4 of Homo sapiens (Human).